An 84-amino-acid chain; its full sequence is MSEPIENLTVDAVLEAVGLFCPEPVMMLHQKVRDLPAGGLLKVIATDPSTRRDIPKFCVFLGHELVAEQAEEGTFLYWIRKKPD.

Cys-21 serves as the catalytic Cysteine persulfide intermediate.

This sequence belongs to the sulfur carrier protein TusA family.

Its subcellular location is the cytoplasm. Functionally, sulfur carrier protein which probably makes part of a sulfur-relay system. In Pseudomonas savastanoi pv. phaseolicola (strain 1448A / Race 6) (Pseudomonas syringae pv. phaseolicola (strain 1448A / Race 6)), this protein is Sulfur carrier protein TusA.